The primary structure comprises 132 residues: Putative nickel-responsive regulator (132 aa).

Positions 77, 88, 90, and 96 each coordinate Ni(2+).

It belongs to the transcriptional regulatory CopG/NikR family. Ni(2+) serves as cofactor.

Its function is as follows. Transcriptional regulator. In Brucella abortus (strain S19), this protein is Putative nickel-responsive regulator.